Here is a 574-residue protein sequence, read N- to C-terminus: Developmental and secondary metabolism regulator veA (574 aa).

4 disordered regions span residues 1–22 (MATR…SRIT), 39–60 (ERAR…VDPP), 255–500 (RSSD…GAGK), and 513–540 (RSYE…YPRR). The 206-residue stretch at 25-230 (GKKLTYKLNV…AEQGCRVRIR (206 aa)) folds into the Velvet domain. The Nuclear localization signal signature appears at 39-44 (ERARAC). 2 stretches are compositionally biased toward pro residues: residues 314-323 (RPLPPAPGPA) and 330-341 (PAPPAPPAPPSH). Composition is skewed to polar residues over residues 343–353 (PGYQSHLSFGS), 385–394 (HARNPSTSAE), 406–415 (RMSTERSSYP), and 448–458 (VAQSAAPRSQT). The segment at 457-498 (QTPSSSLVPSLPPLKALSGDYPNNLSQSSSSTSQSPSHDLGA) is PEST. Composition is skewed to low complexity over residues 459–474 (PSSS…KALS) and 482–493 (SQSSSSTSQSPS). Positions 513-525 (RSYEDSFGHDDRP) are enriched in basic and acidic residues.

It belongs to the velvet family. VeA subfamily. As to quaternary structure, component of the heterotrimeric velvet complex composed of laeA, veA and velB; VeA acting as a bridging protein between laeA and velB.

The protein localises to the nucleus. The protein resides in the cytoplasm. In terms of biological role, component of the velvet transcription factor complex that controls sexual/asexual developmental ratio in response to light, promoting sexual development in the darkness while stimulating asexual sporulation under illumination. The velvet complex hat acts as a global regulator for secondary metabolite gene expression. Controls the expression of the cyclopiazonic acid, aflatrem, and aflatoxin gene clusters. Controls the expression of the sclerotium-specific pigment asparasone A gene cluster. Controls the expression of the aflavarin gene cluster. also controls the production of hydrolases and other extracellular proteins during growth on natural starch-based substrates. Regulates genes involved in the High Osmolarity Glycerol (HOG) signaling pathway. Required for the conidial and sclerotial density-dependent production. In Aspergillus flavus (strain ATCC 200026 / FGSC A1120 / IAM 13836 / NRRL 3357 / JCM 12722 / SRRC 167), this protein is Developmental and secondary metabolism regulator veA.